Here is a 333-residue protein sequence, read N- to C-terminus: Ketol-acid reductoisomerase (NADP(+)) (333 aa).

The 171-residue stretch at 1 to 171 (MSNHTQPKIA…GGARANIIKT (171 aa)) folds into the KARI N-terminal Rossmann domain. NADP(+)-binding positions include 14 to 17 (YGSQ), Arg-37, Thr-42, and 72 to 75 (DMVQ). His-97 is an active-site residue. Gly-123 serves as a coordination point for NADP(+). The region spanning 172 to 317 (TFKEETETDL…KKLRAKMVWL (146 aa)) is the KARI C-terminal knotted domain. Residues Asp-180, Glu-184, Glu-216, and Glu-220 each contribute to the Mg(2+) site. Residue Ser-241 coordinates substrate.

It belongs to the ketol-acid reductoisomerase family. Mg(2+) is required as a cofactor.

The enzyme catalyses (2R)-2,3-dihydroxy-3-methylbutanoate + NADP(+) = (2S)-2-acetolactate + NADPH + H(+). It catalyses the reaction (2R,3R)-2,3-dihydroxy-3-methylpentanoate + NADP(+) = (S)-2-ethyl-2-hydroxy-3-oxobutanoate + NADPH + H(+). Its pathway is amino-acid biosynthesis; L-isoleucine biosynthesis; L-isoleucine from 2-oxobutanoate: step 2/4. It participates in amino-acid biosynthesis; L-valine biosynthesis; L-valine from pyruvate: step 2/4. Functionally, involved in the biosynthesis of branched-chain amino acids (BCAA). Catalyzes an alkyl-migration followed by a ketol-acid reduction of (S)-2-acetolactate (S2AL) to yield (R)-2,3-dihydroxy-isovalerate. In the isomerase reaction, S2AL is rearranged via a Mg-dependent methyl migration to produce 3-hydroxy-3-methyl-2-ketobutyrate (HMKB). In the reductase reaction, this 2-ketoacid undergoes a metal-dependent reduction by NADPH to yield (R)-2,3-dihydroxy-isovalerate. The protein is Ketol-acid reductoisomerase (NADP(+)) of Xanthomonas axonopodis pv. citri (strain 306).